The primary structure comprises 201 residues: Pyridoxine/pyridoxamine 5'-phosphate oxidase (201 aa).

Residues 49-54 (RMVLLK), 64-65 (YT), K71, and Q93 each bind FMN. A substrate-binding site is contributed by K54. Substrate is bound by residues Y111, R115, and S119. Residues 128-129 (QS) and W172 contribute to the FMN site. A substrate-binding site is contributed by 178-180 (RLH). R182 contributes to the FMN binding site.

It belongs to the pyridoxamine 5'-phosphate oxidase family. Homodimer. Requires FMN as cofactor.

It carries out the reaction pyridoxamine 5'-phosphate + O2 + H2O = pyridoxal 5'-phosphate + H2O2 + NH4(+). The catalysed reaction is pyridoxine 5'-phosphate + O2 = pyridoxal 5'-phosphate + H2O2. The protein operates within cofactor metabolism; pyridoxal 5'-phosphate salvage; pyridoxal 5'-phosphate from pyridoxamine 5'-phosphate: step 1/1. It participates in cofactor metabolism; pyridoxal 5'-phosphate salvage; pyridoxal 5'-phosphate from pyridoxine 5'-phosphate: step 1/1. Functionally, catalyzes the oxidation of either pyridoxine 5'-phosphate (PNP) or pyridoxamine 5'-phosphate (PMP) into pyridoxal 5'-phosphate (PLP). The sequence is that of Pyridoxine/pyridoxamine 5'-phosphate oxidase from Roseobacter denitrificans (strain ATCC 33942 / OCh 114) (Erythrobacter sp. (strain OCh 114)).